The following is a 101-amino-acid chain: Interleukin-8 (101 aa).

A signal peptide spans 1-22 (MTSKLAIALLAAFLLSAALCKA). Arg27 is modified (citrulline). 2 disulfide bridges follow: Cys34/Cys61 and Cys36/Cys77.

It belongs to the intercrine alpha (chemokine CxC) family. Homodimer. In terms of processing, citrullination at Arg-27 prevents proteolysis, and dampens tissue inflammation, it also enhances leukocytosis, possibly through impaired chemokine clearance from the blood circulation.

Its subcellular location is the secreted. Chemotactic factor that mediates inflammatory response by attracting neutrophils, basophils, and T-cells to clear pathogens and protect the host from infection. Also plays an important role in neutrophil activation. Released in response to an inflammatory stimulus, exerts its effect by binding to the G-protein-coupled receptors CXCR1 and CXCR2, primarily found in neutrophils, monocytes and endothelial cells. G-protein heterotrimer (alpha, beta, gamma subunits) constitutively binds to CXCR1/CXCR2 receptor and activation by IL8 leads to beta and gamma subunits release from Galpha (GNAI2 in neutrophils) and activation of several downstream signaling pathways including PI3K and MAPK pathways. In Tursiops truncatus (Atlantic bottle-nosed dolphin), this protein is Interleukin-8 (CXCL8).